The chain runs to 588 residues: Adenine deaminase (588 aa).

Belongs to the metallo-dependent hydrolases superfamily. Adenine deaminase family. As to quaternary structure, homodimer. Requires Mn(2+) as cofactor.

The enzyme catalyses adenine + H2O + H(+) = hypoxanthine + NH4(+). In Escherichia coli (strain 55989 / EAEC), this protein is Adenine deaminase.